A 334-amino-acid chain; its full sequence is Formamidase (334 aa).

One can recognise a CN hydrolase domain in the interval 14–260; that stretch reads FLVAAIQFPV…WEIVTGEIYP (247 aa). The Proton acceptor role is filled by Glu-60. Lys-133 functions as the Proton donor in the catalytic mechanism. Catalysis depends on Cys-166, which acts as the Nucleophile.

The protein belongs to the carbon-nitrogen hydrolase superfamily. Aliphatic amidase family. In terms of assembly, homotetramer.

The catalysed reaction is formamide + H2O = formate + NH4(+). Its activity is regulated as follows. Inhibited by iodoacetate. Appears to be regulated by the fur protein, but this effect is not mediated at the transcriptional level. Is an aliphatic amidase with a restricted substrate specificity, as it only hydrolyzes formamide. Probably involved in the nitrogen metabolism of H.pylori. The protein is Formamidase (amiF) of Helicobacter pylori (strain ATCC 700392 / 26695) (Campylobacter pylori).